The following is a 240-amino-acid chain: tRNA (guanine-N(1)-)-methyltransferase (240 aa).

Residues G110 and 130–135 (VGDYVL) each bind S-adenosyl-L-methionine.

The protein belongs to the RNA methyltransferase TrmD family. Homodimer.

Its subcellular location is the cytoplasm. It catalyses the reaction guanosine(37) in tRNA + S-adenosyl-L-methionine = N(1)-methylguanosine(37) in tRNA + S-adenosyl-L-homocysteine + H(+). Functionally, specifically methylates guanosine-37 in various tRNAs. The polypeptide is tRNA (guanine-N(1)-)-methyltransferase (Borrelia recurrentis (strain A1)).